The chain runs to 116 residues: Large ribosomal subunit protein bL17 (116 aa).

This sequence belongs to the bacterial ribosomal protein bL17 family. In terms of assembly, part of the 50S ribosomal subunit. Contacts protein L32.

The sequence is that of Large ribosomal subunit protein bL17 from Chloroflexus aggregans (strain MD-66 / DSM 9485).